Here is a 55-residue protein sequence, read N- to C-terminus: Protein CADMIUM TOLERANCE 1 (55 aa).

A helical transmembrane segment spans residues 24–40 (GCLYACIFTALCCFCCY).

This sequence belongs to the CYSTM1 family.

Its subcellular location is the cell membrane. It localises to the secreted. It is found in the cell wall. Confers resistance to heavy metal ions (e.g. cadmium (CdCl(2)) and copper (CuCl(2))) by chelating them at the plasma membrane of root cells, thus stopping their entry and reducing their accumulation. The chain is Protein CADMIUM TOLERANCE 1 from Digitaria ciliaris (Southern crabgrass).